The primary structure comprises 156 residues: ATP synthase subunit b (156 aa).

The helical transmembrane segment at leucine 7–tryptophan 26 threads the bilayer.

It belongs to the ATPase B chain family. In terms of assembly, F-type ATPases have 2 components, F(1) - the catalytic core - and F(0) - the membrane proton channel. F(1) has five subunits: alpha(3), beta(3), gamma(1), delta(1), epsilon(1). F(0) has three main subunits: a(1), b(2) and c(10-14). The alpha and beta chains form an alternating ring which encloses part of the gamma chain. F(1) is attached to F(0) by a central stalk formed by the gamma and epsilon chains, while a peripheral stalk is formed by the delta and b chains.

The protein resides in the cell inner membrane. F(1)F(0) ATP synthase produces ATP from ADP in the presence of a proton or sodium gradient. F-type ATPases consist of two structural domains, F(1) containing the extramembraneous catalytic core and F(0) containing the membrane proton channel, linked together by a central stalk and a peripheral stalk. During catalysis, ATP synthesis in the catalytic domain of F(1) is coupled via a rotary mechanism of the central stalk subunits to proton translocation. Its function is as follows. Component of the F(0) channel, it forms part of the peripheral stalk, linking F(1) to F(0). In Dechloromonas aromatica (strain RCB), this protein is ATP synthase subunit b.